The primary structure comprises 241 residues: PHD finger protein ALFIN-LIKE 1 (241 aa).

A2 bears the N-acetylalanine mark. The interval 142-182 (DGKPSMDLGSKSRNGVKRSIEGQTKSTPKLMEESYEDEDDE) is disordered. Residues 185–237 (DTLCGSCGGNYTNDEFWICCDVCERWYHGKCVKITPAKAESIKQYKCPSCCTK) form a PHD-type zinc finger.

This sequence belongs to the Alfin family. Interacts with H3K4me3 and to a lesser extent with H3K4me2. In terms of tissue distribution, ubiquitously expressed.

The protein resides in the nucleus. Histone-binding component that specifically recognizes H3 tails trimethylated on 'Lys-4' (H3K4me3), which mark transcription start sites of virtually all active genes. This chain is PHD finger protein ALFIN-LIKE 1 (AL1), found in Arabidopsis thaliana (Mouse-ear cress).